The primary structure comprises 193 residues: ATP-dependent Clp protease proteolytic subunit (193 aa).

Serine 98 acts as the Nucleophile in catalysis. Residue histidine 123 is part of the active site.

The protein belongs to the peptidase S14 family. In terms of assembly, fourteen ClpP subunits assemble into 2 heptameric rings which stack back to back to give a disk-like structure with a central cavity, resembling the structure of eukaryotic proteasomes.

The protein localises to the cytoplasm. The enzyme catalyses Hydrolysis of proteins to small peptides in the presence of ATP and magnesium. alpha-casein is the usual test substrate. In the absence of ATP, only oligopeptides shorter than five residues are hydrolyzed (such as succinyl-Leu-Tyr-|-NHMec, and Leu-Tyr-Leu-|-Tyr-Trp, in which cleavage of the -Tyr-|-Leu- and -Tyr-|-Trp bonds also occurs).. In terms of biological role, cleaves peptides in various proteins in a process that requires ATP hydrolysis. Has a chymotrypsin-like activity. Plays a major role in the degradation of misfolded proteins. This Histophilus somni (strain 2336) (Haemophilus somnus) protein is ATP-dependent Clp protease proteolytic subunit.